The chain runs to 391 residues: Succinyl-diaminopimelate desuccinylase (391 aa).

His74 is a binding site for Zn(2+). The active site involves Asp76. Position 107 (Asp107) interacts with Zn(2+). The active-site Proton acceptor is Glu141. Zn(2+)-binding residues include Glu142, Glu170, and His360.

The protein belongs to the peptidase M20A family. DapE subfamily. As to quaternary structure, homodimer. Zn(2+) is required as a cofactor. The cofactor is Co(2+).

It carries out the reaction N-succinyl-(2S,6S)-2,6-diaminopimelate + H2O = (2S,6S)-2,6-diaminopimelate + succinate. It participates in amino-acid biosynthesis; L-lysine biosynthesis via DAP pathway; LL-2,6-diaminopimelate from (S)-tetrahydrodipicolinate (succinylase route): step 3/3. Catalyzes the hydrolysis of N-succinyl-L,L-diaminopimelic acid (SDAP), forming succinate and LL-2,6-diaminopimelate (DAP), an intermediate involved in the bacterial biosynthesis of lysine and meso-diaminopimelic acid, an essential component of bacterial cell walls. This Variovorax paradoxus (strain S110) protein is Succinyl-diaminopimelate desuccinylase.